A 382-amino-acid polypeptide reads, in one-letter code: Bifunctional enzyme IspD/IspF (382 aa).

Positions 1-225 (MTFSVVIVAA…EHLAGVARVT (225 aa)) are 2-C-methyl-D-erythritol 4-phosphate cytidylyltransferase. The tract at residues 226 to 382 (RVGQGFDAHR…SAVVAVETPA (157 aa)) is 2-C-methyl-D-erythritol 2,4-cyclodiphosphate synthase. A divalent metal cation contacts are provided by Asp-232 and His-234. Residues 232-234 (DAH) and 258-259 (HS) each bind 4-CDP-2-C-methyl-D-erythritol 2-phosphate. An a divalent metal cation-binding site is contributed by His-266. 4-CDP-2-C-methyl-D-erythritol 2-phosphate-binding positions include 280-282 (DIG), 356-359 (TTTE), Phe-363, and Arg-366.

It in the N-terminal section; belongs to the IspD/TarI cytidylyltransferase family. IspD subfamily. This sequence in the C-terminal section; belongs to the IspF family. The cofactor is a divalent metal cation.

The enzyme catalyses 2-C-methyl-D-erythritol 4-phosphate + CTP + H(+) = 4-CDP-2-C-methyl-D-erythritol + diphosphate. It carries out the reaction 4-CDP-2-C-methyl-D-erythritol 2-phosphate = 2-C-methyl-D-erythritol 2,4-cyclic diphosphate + CMP. Its pathway is isoprenoid biosynthesis; isopentenyl diphosphate biosynthesis via DXP pathway; isopentenyl diphosphate from 1-deoxy-D-xylulose 5-phosphate: step 2/6. It participates in isoprenoid biosynthesis; isopentenyl diphosphate biosynthesis via DXP pathway; isopentenyl diphosphate from 1-deoxy-D-xylulose 5-phosphate: step 4/6. In terms of biological role, bifunctional enzyme that catalyzes the formation of 4-diphosphocytidyl-2-C-methyl-D-erythritol from CTP and 2-C-methyl-D-erythritol 4-phosphate (MEP) (IspD), and catalyzes the conversion of 4-diphosphocytidyl-2-C-methyl-D-erythritol 2-phosphate (CDP-ME2P) to 2-C-methyl-D-erythritol 2,4-cyclodiphosphate (ME-CPP) with a corresponding release of cytidine 5-monophosphate (CMP) (IspF). This is Bifunctional enzyme IspD/IspF from Caulobacter vibrioides (strain ATCC 19089 / CIP 103742 / CB 15) (Caulobacter crescentus).